Here is a 590-residue protein sequence, read N- to C-terminus: Plasmepsin V (590 aa).

Over 1–544 the chain is Lumenal; the sequence is MNNYFLRKEN…EKENIFLKVS (544 aa). The stretch at 33–81 forms a coiled coil; sequence CNNVENKIDNVGKKIENVGKKIGDMENKNDNVENKNDNVGNKNDNVKNA. Residues 100-514 enclose the Peptidase A1 domain; that stretch reads YFLDIDIGKP…DLQQNQIAFI (415 aa). Residue D118 is part of the active site. 7 disulfides stabilise this stretch: C128–C211, C131–C134, C155–C166, C160–C171, C259–C518, C389–C434, and C443–C479. Positions 282–291 are enriched in basic and acidic residues; that stretch reads KEKQKMDKSD. Residues 282–316 form a disordered region; that stretch reads KEKQKMDKSDNNSSNKGNVSIKLKNNDKNDDEENN. Positions 292–304 are enriched in low complexity; the sequence is NNSSNKGNVSIKL. Residue D365 is part of the active site. Residues 545–565 form a helical membrane-spanning segment; that stretch reads YINLYCLWLLLALTILLSLIL. Over 566-590 the chain is Cytoplasmic; that stretch reads YVRKMFYMDYFPLSDQNKSPIQEST.

The protein belongs to the peptidase A1 family. Component of a complex composed of SPC25 and PMV; the interaction is mediated via the transmembrane domains. The complex interacts with the SEC61 channel-forming translocon complex and is involved in the recognition and import of PEXEL motif-containing proteins into the ER for subsequent export. In terms of processing, it is not clear if the zymogen has a cleavable propeptide. In vitro, appears to be cleaved between Asn-80 and Ala-81. Cleavage of the putative propeptide is dispensable for catalytic activity.

Its subcellular location is the endoplasmic reticulum membrane. Inhibited by peptidomimetic inhibitor WEHI-842. Inhibited by Cu(2+) and Hg(2+). Its function is as follows. During the asexual blood stage, plays an essential role in the export of several proteins into the host erythrocytes by cleaving the pentameric localization motif RxLxE/Q/D (termed Plasmodium export element (PEXEL)) located downstream of the N-terminal secretory signal sequence. Specifically, cleaves after the leucine residue in the RxLxE/Q/D (or RxLxxE) motif of exported proteins including RESA, EMP2, EMP3, KAHRP, RIF/Rifin and STEVOR. Also, by regulating protein export, plays an essential role in gametocyte development and thus, parasite transmission to the mosquito vector. In Plasmodium falciparum (isolate 3D7), this protein is Plasmepsin V.